A 359-amino-acid chain; its full sequence is Probable tyrosine-protein phosphatase pir-2 (359 aa).

A Tyrosine-protein phosphatase domain is found at Q16–D191. The active-site Phosphocysteine intermediate is C131. The span at D184–R199 shows a compositional bias: basic and acidic residues. 3 disordered regions span residues D184 to E211, S234 to W259, and P274 to M328. Over residues Q200–R210 the composition is skewed to basic residues. Polar residues predominate over residues S234–G246. A compositionally biased stretch (acidic residues) spans P290–T309. The segment covering S319–M328 has biased composition (basic residues).

It belongs to the protein-tyrosine phosphatase family. Non-receptor class CDC14 subfamily.

It catalyses the reaction O-phospho-L-tyrosyl-[protein] + H2O = L-tyrosyl-[protein] + phosphate. The chain is Probable tyrosine-protein phosphatase pir-2 from Caenorhabditis elegans.